A 365-amino-acid polypeptide reads, in one-letter code: Endophilin-B1 (365 aa).

Residue M1 is modified to N-acetylmethionine. The segment at 1 to 30 is membrane-binding amphipathic helix; it reads MNIMDFNVKKLAADAGTFLSRAVQFTEEKL. Positions 1 to 37 are required for membrane binding; the sequence is MNIMDFNVKKLAADAGTFLSRAVQFTEEKLGQAEKTE. Residues 27 to 261 form the BAR domain; the sequence is EEKLGQAEKT…LGSFPSNYHS (235 aa). The residue at position 145 (T145) is a Phosphothreonine; by CDK5. Positions 155–195 form a coiled coil; sequence YKTIAKERKLLQNKRLDLDAAKTRLKKAKAAETRASSEQEL. The 61-residue stretch at 305 to 365 folds into the SH3 domain; that stretch reads GGSRRARVLY…VPITYLELLN (61 aa).

The protein belongs to the endophilin family. Homodimer, and heterodimer with SH3GLB2. Binds BAX; induction of apoptosis augments BAX binding. Binds DNM1, HTT, AMPH, BIN1 and ARFGAP1. Interacts with UVRAG; UVRAG bridges the interaction to BECN1 indicative for an association with the PI3K complex II (PI3KC3-C2). In terms of processing, phosphorylated at Thr-145 by CDK5; this phosphorylation is required for autophagy induction in starved neurons and facilitates homodimerization.

It localises to the cytoplasm. The protein resides in the golgi apparatus membrane. Its subcellular location is the mitochondrion outer membrane. The protein localises to the cytoplasmic vesicle. It is found in the autophagosome membrane. It localises to the midbody. Its function is as follows. May be required for normal outer mitochondrial membrane dynamics. Required for coatomer-mediated retrograde transport in certain cells. May recruit other proteins to membranes with high curvature. May promote membrane fusion. Involved in activation of caspase-dependent apoptosis by promoting BAX/BAK1 activation. Involved in caspase-independent apoptosis during nutrition starvation and involved in the regulation of autophagy. Activates lipid kinase activity of PIK3C3 during autophagy probably by associating with the PI3K complex II (PI3KC3-C2). Associated with PI3KC3-C2 during autophagy may regulate the trafficking of ATG9A from the Golgi complex to the peripheral cytoplasm for the formation of autophagosomes by inducing Golgi membrane tubulation and fragmentation. Involved in regulation of degradative endocytic trafficking and cytokinesis, probably in the context of PI3KC3-C2. In Bos taurus (Bovine), this protein is Endophilin-B1 (SH3GLB1).